The sequence spans 100 residues: Urease subunit gamma (100 aa).

This sequence belongs to the urease gamma subunit family. In terms of assembly, heterotrimer of UreA (gamma), UreB (beta) and UreC (alpha) subunits. Three heterotrimers associate to form the active enzyme.

The protein resides in the cytoplasm. It carries out the reaction urea + 2 H2O + H(+) = hydrogencarbonate + 2 NH4(+). The protein operates within nitrogen metabolism; urea degradation; CO(2) and NH(3) from urea (urease route): step 1/1. The sequence is that of Urease subunit gamma from Blochmanniella pennsylvanica (strain BPEN).